The chain runs to 330 residues: Phosphate acyltransferase (330 aa).

It belongs to the PlsX family. In terms of assembly, homodimer. Probably interacts with PlsY.

It is found in the cytoplasm. The enzyme catalyses a fatty acyl-[ACP] + phosphate = an acyl phosphate + holo-[ACP]. Its pathway is lipid metabolism; phospholipid metabolism. In terms of biological role, catalyzes the reversible formation of acyl-phosphate (acyl-PO(4)) from acyl-[acyl-carrier-protein] (acyl-ACP). This enzyme utilizes acyl-ACP as fatty acyl donor, but not acyl-CoA. The protein is Phosphate acyltransferase of Streptococcus pneumoniae (strain JJA).